A 102-amino-acid polypeptide reads, in one-letter code: Co-chaperonin GroES (102 aa).

This sequence belongs to the GroES chaperonin family. Heptamer of 7 subunits arranged in a ring. Interacts with the chaperonin GroEL.

It localises to the cytoplasm. In terms of biological role, together with the chaperonin GroEL, plays an essential role in assisting protein folding. The GroEL-GroES system forms a nano-cage that allows encapsulation of the non-native substrate proteins and provides a physical environment optimized to promote and accelerate protein folding. GroES binds to the apical surface of the GroEL ring, thereby capping the opening of the GroEL channel. The polypeptide is Co-chaperonin GroES (Chlamydia felis (strain Fe/C-56) (Chlamydophila felis)).